A 700-amino-acid polypeptide reads, in one-letter code: uncharacterized protein (700 aa).

Residues C307, C310, C314, and C558 each contribute to the [4Fe-4S] cluster site.

It belongs to the AOR/FOR family. The cofactor is [4Fe-4S] cluster. It depends on Mo-molybdopterin as a cofactor. Requires tungstopterin as cofactor.

This is an uncharacterized protein from Escherichia coli (strain K12).